Consider the following 82-residue polypeptide: uncharacterized protein (82 aa).

3 consecutive transmembrane segments (helical) span residues Ile4–Phe26, Phe31–Ala50, and Ser55–Leu77.

The protein localises to the cell membrane. This is an uncharacterized protein from Bacillus subtilis (strain 168).